The following is a 239-amino-acid chain: MTAPLSLFVTGTDTEIGKTFVSAAMLHGFARHGLRAAALKPVAAGAYERDGVWRNEDADQLDAAANVVLPPELRTPFLLKAPAAPHIVAAQEGVTLDIDTIVACHREALTRADVVVVEGVGGFRVPLTDTQDTADLAVALGLPVVLVVGVRLGCISHALLTADAIRQRGLTLAGWVANHVDPAMSYADENVATIRDWLAREHGAPLLGRIPHMSPAAAESAAAMLDIAALVETLRAAQH.

Position 15–20 (15–20 (EIGKTF)) interacts with ATP. Thr19 lines the Mg(2+) pocket. Lys40 is a catalytic residue. ATP-binding positions include Asp57, 118–121 (EGVG), and 178–179 (NH). 2 residues coordinate Mg(2+): Asp57 and Glu118.

Belongs to the dethiobiotin synthetase family. Homodimer. Mg(2+) serves as cofactor.

The protein localises to the cytoplasm. It catalyses the reaction (7R,8S)-7,8-diammoniononanoate + CO2 + ATP = (4R,5S)-dethiobiotin + ADP + phosphate + 3 H(+). It participates in cofactor biosynthesis; biotin biosynthesis; biotin from 7,8-diaminononanoate: step 1/2. Functionally, catalyzes a mechanistically unusual reaction, the ATP-dependent insertion of CO2 between the N7 and N8 nitrogen atoms of 7,8-diaminopelargonic acid (DAPA, also called 7,8-diammoniononanoate) to form a ureido ring. This Burkholderia ambifaria (strain ATCC BAA-244 / DSM 16087 / CCUG 44356 / LMG 19182 / AMMD) (Burkholderia cepacia (strain AMMD)) protein is ATP-dependent dethiobiotin synthetase BioD.